We begin with the raw amino-acid sequence, 680 residues long: UvrABC system protein B (680 aa).

A Helicase ATP-binding domain is found at 27 to 192; the sequence is SNIEAGVTDQ…ERNDYDFHRG (166 aa). 40–47 is an ATP binding site; sequence GVTGSGKT. A Beta-hairpin motif is present at residues 93 to 116; it reads YYDYYQPEAYVPSSDTYIEKDSSI. One can recognise a Helicase C-terminal domain in the interval 432–594; sequence QVDDLLGECR…IVPATIRKAV (163 aa). In terms of domain architecture, UVR spans 637–672; the sequence is AKQIQQLERDMREAAKELEFERAAELRDRIRLLREH.

Belongs to the UvrB family. Forms a heterotetramer with UvrA during the search for lesions. Interacts with UvrC in an incision complex.

The protein resides in the cytoplasm. Its function is as follows. The UvrABC repair system catalyzes the recognition and processing of DNA lesions. A damage recognition complex composed of 2 UvrA and 2 UvrB subunits scans DNA for abnormalities. Upon binding of the UvrA(2)B(2) complex to a putative damaged site, the DNA wraps around one UvrB monomer. DNA wrap is dependent on ATP binding by UvrB and probably causes local melting of the DNA helix, facilitating insertion of UvrB beta-hairpin between the DNA strands. Then UvrB probes one DNA strand for the presence of a lesion. If a lesion is found the UvrA subunits dissociate and the UvrB-DNA preincision complex is formed. This complex is subsequently bound by UvrC and the second UvrB is released. If no lesion is found, the DNA wraps around the other UvrB subunit that will check the other stand for damage. This chain is UvrABC system protein B, found in Nitratidesulfovibrio vulgaris (strain DSM 19637 / Miyazaki F) (Desulfovibrio vulgaris).